A 498-amino-acid chain; its full sequence is Protein flp (498 aa).

4 helical membrane-spanning segments follow: residues 6–26 (LYFL…IHIT), 389–409 (FNIV…FSAY), 433–453 (LTLC…YLIL), and 471–491 (LALI…LLFL).

It localises to the cell membrane. Functionally, its precise function is unknown. Has no penicillin-binding activity and is not involved in methicillin resistance. This is Protein flp (flp) from Staphylococcus aureus (strain MW2).